The primary structure comprises 205 residues: Thymidylate kinase (205 aa).

7–14 (GIDGSGKT) contacts ATP.

Belongs to the thymidylate kinase family.

The enzyme catalyses dTMP + ATP = dTDP + ADP. In terms of biological role, phosphorylation of dTMP to form dTDP in both de novo and salvage pathways of dTTP synthesis. This is Thymidylate kinase from Wolbachia sp. subsp. Brugia malayi (strain TRS).